The primary structure comprises 210 residues: UPF0301 protein M446_6268 (210 aa).

It belongs to the UPF0301 (AlgH) family.

The protein is UPF0301 protein M446_6268 of Methylobacterium sp. (strain 4-46).